We begin with the raw amino-acid sequence, 70 residues long: Large ribosomal subunit protein uL29 (70 aa).

Belongs to the universal ribosomal protein uL29 family.

The protein is Large ribosomal subunit protein uL29 of Rickettsia bellii (strain OSU 85-389).